Consider the following 258-residue polypeptide: Putative [LysW]-aminoadipate/[LysW]-glutamate kinase (258 aa).

Substrate-binding positions include Gly-33 to Gly-34, Arg-60, and Asn-164.

Belongs to the acetylglutamate kinase family. LysZ subfamily.

It is found in the cytoplasm. It catalyses the reaction [amino-group carrier protein]-C-terminal-N-(1,4-dicarboxybutan-1-yl)-L-glutamine + ATP = [amino-group carrier protein]-C-terminal-N-(1-carboxy-5-phosphooxy-5-oxopentan-1-yl)-L-glutamine + ADP. The enzyme catalyses [amino-group carrier protein]-C-terminal-gamma-(L-glutamyl)-L-glutamate + ATP = [amino-group carrier protein]-C-terminal-gamma-(5-phospho-L-glutamyl)-L-glutamate + ADP. The protein operates within amino-acid biosynthesis; L-lysine biosynthesis via AAA pathway; L-lysine from L-alpha-aminoadipate (Thermus route): step 2/5. Its pathway is amino-acid biosynthesis; L-arginine biosynthesis. Its function is as follows. Involved in both the arginine and lysine biosynthetic pathways. Phosphorylates the LysW-bound precursors glutamate (for arginine biosynthesis), respectively alpha-aminoadipate (for lysine biosynthesis). In Caldivirga maquilingensis (strain ATCC 700844 / DSM 13496 / JCM 10307 / IC-167), this protein is Putative [LysW]-aminoadipate/[LysW]-glutamate kinase.